Reading from the N-terminus, the 113-residue chain is Putative pterin-4-alpha-carbinolamine dehydratase (113 aa).

The protein belongs to the pterin-4-alpha-carbinolamine dehydratase family.

The catalysed reaction is (4aS,6R)-4a-hydroxy-L-erythro-5,6,7,8-tetrahydrobiopterin = (6R)-L-erythro-6,7-dihydrobiopterin + H2O. This is Putative pterin-4-alpha-carbinolamine dehydratase from Legionella pneumophila (strain Paris).